Here is a 153-residue protein sequence, read N- to C-terminus: Movement protein (153 aa).

2 disordered regions span residues 1–24 (MAQE…EQDP) and 107–153 (ALSL…RNQR). 2 stretches are compositionally biased toward polar residues: residues 109–122 (SLLS…NQPW) and 140–153 (GQRQ…RNQR).

This sequence belongs to the luteoviruses movement protein family.

The protein localises to the host nucleus envelope. In terms of biological role, transports viral genome to neighboring plant cells directly through plasmosdesmata, without any budding. The movement protein allows efficient cell to cell propagation, by bypassing the host cell wall barrier. Acts as a suppressor of RNA-mediated gene silencing, also known as post-transcriptional gene silencing (PTGS), a mechanism of plant viral defense that limits the accumulation of viral RNAs. This is Movement protein from Avena byzantina (Oat).